The chain runs to 720 residues: Protein-glutamine gamma-glutamyltransferase 5 (720 aa).

At A2 the chain carries N-acetylalanine. Active-site residues include C278, H337, and D360. Ca(2+)-binding residues include N400, D402, E448, and E453. A disordered region spans residues 470–499 (HGSQRGAELQPSRPTSLSQDSPRSLHTPSL). Positions 481-496 (SRPTSLSQDSPRSLHT) are enriched in polar residues.

It belongs to the transglutaminase superfamily. Transglutaminase family. It depends on Ca(2+) as a cofactor. Expressed in foreskin keratinocytes.

The protein resides in the cytoplasm. It carries out the reaction L-glutaminyl-[protein] + L-lysyl-[protein] = [protein]-L-lysyl-N(6)-5-L-glutamyl-[protein] + NH4(+). Its function is as follows. Catalyzes the cross-linking of proteins and the conjugation of polyamines to proteins. Contributes to the formation of the cornified cell envelope of keratinocytes. In Homo sapiens (Human), this protein is Protein-glutamine gamma-glutamyltransferase 5 (TGM5).